The sequence spans 215 residues: Pyrophosphatase PpaX (215 aa).

The Nucleophile role is filled by Asp-9.

It belongs to the HAD-like hydrolase superfamily. PpaX family. Requires Mg(2+) as cofactor.

The catalysed reaction is diphosphate + H2O = 2 phosphate + H(+). Functionally, hydrolyzes pyrophosphate formed during P-Ser-HPr dephosphorylation by HPrK/P. Might play a role in controlling the intracellular pyrophosphate pool. In Anoxybacillus flavithermus (strain DSM 21510 / WK1), this protein is Pyrophosphatase PpaX.